Here is a 229-residue protein sequence, read N- to C-terminus: Heptaprenylglyceryl phosphate synthase (229 aa).

Sn-glycerol 1-phosphate is bound at residue Lys-12. Residues Asp-14 and Ser-40 each coordinate Mg(2+). Sn-glycerol 1-phosphate contacts are provided by residues 159–164, Gly-189, and 209–210; these read YLEYSG and GN.

The protein belongs to the GGGP/HepGP synthase family. Group I subfamily. As to quaternary structure, homodimer. Mg(2+) serves as cofactor.

The catalysed reaction is sn-glycerol 1-phosphate + all-trans-heptaprenyl diphosphate = 3-heptaprenyl-sn-glycero-1-phosphate + diphosphate. It functions in the pathway membrane lipid metabolism; glycerophospholipid metabolism. Functionally, prenyltransferase that catalyzes in vivo the transfer of the heptaprenyl moiety of heptaprenyl pyrophosphate (HepPP; 35 carbon atoms) to the C3 hydroxyl of sn-glycerol-1-phosphate (G1P), producing heptaprenylglyceryl phosphate (HepGP). This reaction is an ether-bond-formation step in the biosynthesis of archaea-type G1P-based membrane lipids found in Bacillales. The chain is Heptaprenylglyceryl phosphate synthase from Bacillus anthracis (strain A0248).